Reading from the N-terminus, the 285-residue chain is Cell division protein ZipA (285 aa).

Residue methionine 1 is a topological domain, periplasmic. The chain crosses the membrane as a helical span at residues 2–22 (EIGLREWLIVIGIVVIGGILF). Over 23–285 (DGWRRMRGSK…FERRQLTHKR (263 aa)) the chain is Cytoplasmic. Residues 49 to 88 (AVSENSELLGPSRSVDFPQGAGFEPDEENLPSLSVRGPSR) are disordered.

Belongs to the ZipA family. Interacts with FtsZ via their C-terminal domains.

Its subcellular location is the cell inner membrane. In terms of biological role, essential cell division protein that stabilizes the FtsZ protofilaments by cross-linking them and that serves as a cytoplasmic membrane anchor for the Z ring. Also required for the recruitment to the septal ring of downstream cell division proteins. This is Cell division protein ZipA from Azotobacter vinelandii (strain DJ / ATCC BAA-1303).